Consider the following 228-residue polypeptide: L-ribulose-5-phosphate 4-epimerase UlaF (228 aa).

Substrate is bound by residues 26 to 27 (GN), 43 to 44 (SG), and 72 to 73 (SS). Zn(2+) is bound by residues Asp74, His93, and His95. The active-site Proton donor/acceptor is the Asp118. Residue His167 coordinates Zn(2+). The active-site Proton donor/acceptor is the Tyr225.

It belongs to the aldolase class II family. AraD/FucA subfamily. Requires Zn(2+) as cofactor.

The catalysed reaction is L-ribulose 5-phosphate = D-xylulose 5-phosphate. It participates in cofactor degradation; L-ascorbate degradation; D-xylulose 5-phosphate from L-ascorbate: step 4/4. Its function is as follows. Catalyzes the isomerization of L-ribulose 5-phosphate to D-xylulose 5-phosphate. Is involved in the anaerobic L-ascorbate utilization. The sequence is that of L-ribulose-5-phosphate 4-epimerase UlaF from Escherichia coli (strain 55989 / EAEC).